Reading from the N-terminus, the 189-residue chain is Elongation factor P (189 aa).

The residue at position 34 (Lys34) is an N6-(3,6-diaminohexanoyl)-5-hydroxylysine.

The protein belongs to the elongation factor P family. Post-translationally, may be beta-lysylated on the epsilon-amino group of Lys-34 by the combined action of EpmA and EpmB, and then hydroxylated on the C5 position of the same residue by EpmC (if this protein is present). Lysylation is critical for the stimulatory effect of EF-P on peptide-bond formation. The lysylation moiety may extend toward the peptidyltransferase center and stabilize the terminal 3-CCA end of the tRNA. Hydroxylation of the C5 position on Lys-34 may allow additional potential stabilizing hydrogen-bond interactions with the P-tRNA.

The protein resides in the cytoplasm. It functions in the pathway protein biosynthesis; polypeptide chain elongation. Its function is as follows. Involved in peptide bond synthesis. Alleviates ribosome stalling that occurs when 3 or more consecutive Pro residues or the sequence PPG is present in a protein, possibly by augmenting the peptidyl transferase activity of the ribosome. Modification of Lys-34 is required for alleviation. The polypeptide is Elongation factor P (Buchnera aphidicola subsp. Baizongia pistaciae (strain Bp)).